The chain runs to 585 residues: A-type ATP synthase subunit A (585 aa).

Position 231-238 (231-238) interacts with ATP; it reads GPFGSGKT.

This sequence belongs to the ATPase alpha/beta chains family. As to quaternary structure, has multiple subunits with at least A(3), B(3), C, D, E, F, H, I and proteolipid K(x).

The protein resides in the cell membrane. It carries out the reaction ATP + H2O + 4 H(+)(in) = ADP + phosphate + 5 H(+)(out). Functionally, component of the A-type ATP synthase that produces ATP from ADP in the presence of a proton gradient across the membrane. The A chain is the catalytic subunit. The sequence is that of A-type ATP synthase subunit A from Thermococcus onnurineus (strain NA1).